A 358-amino-acid chain; its full sequence is Dynein axonemal assembly factor 10 (358 aa).

WD repeat units lie at residues 64-106 (EKPK…TPVY), 116-155 (NCID…TPVA), 163-206 (ETKR…VRWE), 208-250 (NIKN…PSKG), 258-298 (AHKS…QRSR), and 320-358 (LSTQ…LNKL).

In terms of assembly, interacts with PIH1D1; the interaction associates DNAAF10 with the R2TP complex. Interacts with several dynein axonemal assembly factors.

Its subcellular location is the dynein axonemal particle. Its function is as follows. Key assembly factor specifically required for the stability of axonemal dynein heavy chains in cytoplasm. The chain is Dynein axonemal assembly factor 10 (dnaaf10) from Xenopus tropicalis (Western clawed frog).